Consider the following 162-residue polypeptide: Large ribosomal subunit protein eL24 (162 aa).

Disordered stretches follow at residues 64–83 and 117–162; these read DIHAEAAKKRRRTTKKPYSR and ERIK…GGKR. The segment covering 71–81 has biased composition (basic residues); that stretch reads KKRRRTTKKPY. Positions 117–135 are enriched in basic and acidic residues; it reads ERIKKTKDEKKAKKAEVTK.

The protein belongs to the eukaryotic ribosomal protein eL24 family.

The protein resides in the cytoplasm. This Hordeum vulgare (Barley) protein is Large ribosomal subunit protein eL24 (RPL24).